The following is a 160-amino-acid chain: MEKPTSSTNGEKRKSPCDSNNRNDEMQETPNRDLALEPSLKKMKTSEYSTVLVLCYRKTKKIHSNQLENDQSQENSVNPVQEEEDEGSSQEDEDLDSSAESSKQDEDLQLPEGSFQEDKDLGLSEGSSQEDEDLDSSERSSQEEKDPDASEGSSEEGEED.

Disordered regions lie at residues 1 to 48 and 64 to 160; these read MEKP…TSEY and SNQL…GEED. Over residues 10-35 the composition is skewed to basic and acidic residues; it reads GEKRKSPCDSNNRNDEMQETPNRDLA. A compositionally biased stretch (polar residues) spans 64 to 79; the sequence is SNQLENDQSQENSVNP. Residues 81–97 are compositionally biased toward acidic residues; it reads QEEEDEGSSQEDEDLDS. Residues 136–148 show a composition bias toward basic and acidic residues; the sequence is SSERSSQEEKDPD.

It belongs to the SPAN-X family.

In Pongo pygmaeus (Bornean orangutan), this protein is Sperm protein associated with the nucleus on the X chromosome N2 (SPANXN2).